The sequence spans 213 residues: 3-demethoxyubiquinol 3-hydroxylase (213 aa).

Fe cation contacts are provided by Glu-62, Glu-92, His-95, Glu-144, Glu-176, and His-179.

Belongs to the COQ7 family. Requires Fe cation as cofactor.

It localises to the cell membrane. It catalyses the reaction a 5-methoxy-2-methyl-3-(all-trans-polyprenyl)benzene-1,4-diol + AH2 + O2 = a 3-demethylubiquinol + A + H2O. It functions in the pathway cofactor biosynthesis; ubiquinone biosynthesis. Its function is as follows. Catalyzes the hydroxylation of 2-nonaprenyl-3-methyl-6-methoxy-1,4-benzoquinol during ubiquinone biosynthesis. The sequence is that of 3-demethoxyubiquinol 3-hydroxylase from Chromohalobacter salexigens (strain ATCC BAA-138 / DSM 3043 / CIP 106854 / NCIMB 13768 / 1H11).